The primary structure comprises 238 residues: 7-cyano-7-deazaguanine synthase (238 aa).

14-24 (FSGGQDSATCL) contacts ATP. Residues cysteine 202, cysteine 217, cysteine 220, and cysteine 223 each coordinate Zn(2+).

The protein belongs to the QueC family. The cofactor is Zn(2+).

The enzyme catalyses 7-carboxy-7-deazaguanine + NH4(+) + ATP = 7-cyano-7-deazaguanine + ADP + phosphate + H2O + H(+). It participates in purine metabolism; 7-cyano-7-deazaguanine biosynthesis. Functionally, catalyzes the ATP-dependent conversion of 7-carboxy-7-deazaguanine (CDG) to 7-cyano-7-deazaguanine (preQ(0)). The polypeptide is 7-cyano-7-deazaguanine synthase (Nitrobacter winogradskyi (strain ATCC 25391 / DSM 10237 / CIP 104748 / NCIMB 11846 / Nb-255)).